Reading from the N-terminus, the 208-residue chain is ATP synthase subunit b (208 aa).

A signal peptide spans 1 to 27; that stretch reads MVKAKKLVFKWSLLVFSFFTLSLFLVS. A lipid anchor (N-palmitoyl cysteine) is attached at Cys28. Cys28 carries the S-diacylglycerol cysteine lipid modification. Residues 49–69 traverse the membrane as a helical segment; sequence WVFITHLLAFFILLTLMIFLF.

This sequence belongs to the ATPase B chain family. F-type ATPases have 2 components, F(1) - the catalytic core - and F(0) - the membrane proton channel. F(1) has five subunits: alpha(3), beta(3), gamma(1), delta(1), epsilon(1). F(0) has three main subunits: a(1), b(2) and c(10-14). The alpha and beta chains form an alternating ring which encloses part of the gamma chain. F(1) is attached to F(0) by a central stalk formed by the gamma and epsilon chains, while a peripheral stalk is formed by the delta and b chains.

The protein resides in the cell membrane. Its function is as follows. F(1)F(0) ATP synthase produces ATP from ADP in the presence of a proton or sodium gradient. F-type ATPases consist of two structural domains, F(1) containing the extramembraneous catalytic core and F(0) containing the membrane proton channel, linked together by a central stalk and a peripheral stalk. During catalysis, ATP synthesis in the catalytic domain of F(1) is coupled via a rotary mechanism of the central stalk subunits to proton translocation. In terms of biological role, component of the F(0) channel, it forms part of the peripheral stalk, linking F(1) to F(0). The protein is ATP synthase subunit b of Mycoplasma genitalium (strain ATCC 33530 / DSM 19775 / NCTC 10195 / G37) (Mycoplasmoides genitalium).